Here is a 372-residue protein sequence, read N- to C-terminus: 4-hydroxy-3-methylbut-2-en-1-yl diphosphate synthase (flavodoxin) (372 aa).

Residues cysteine 270, cysteine 273, cysteine 305, and glutamate 312 each contribute to the [4Fe-4S] cluster site.

It belongs to the IspG family. [4Fe-4S] cluster is required as a cofactor.

The catalysed reaction is (2E)-4-hydroxy-3-methylbut-2-enyl diphosphate + oxidized [flavodoxin] + H2O + 2 H(+) = 2-C-methyl-D-erythritol 2,4-cyclic diphosphate + reduced [flavodoxin]. It participates in isoprenoid biosynthesis; isopentenyl diphosphate biosynthesis via DXP pathway; isopentenyl diphosphate from 1-deoxy-D-xylulose 5-phosphate: step 5/6. Its function is as follows. Converts 2C-methyl-D-erythritol 2,4-cyclodiphosphate (ME-2,4cPP) into 1-hydroxy-2-methyl-2-(E)-butenyl 4-diphosphate. This is 4-hydroxy-3-methylbut-2-en-1-yl diphosphate synthase (flavodoxin) from Vibrio campbellii (strain ATCC BAA-1116).